The chain runs to 334 residues: Replication-associated protein (334 aa).

The CRESS-DNA virus Rep endonuclease domain maps to 9–111; the sequence is RLQSKYVFLT…DGDIKTRGDF (103 aa). The RCR-1 motif lies at 16–19; the sequence is FLTY. A divalent metal cation contacts are provided by E50, H58, and H60. The RCR-2 motif lies at 58-60; the sequence is HYH. The active-site For DNA cleavage activity is the Y98. The RCR-3 motif lies at 98 to 101; that stretch reads YISK. An a divalent metal cation-binding site is contributed by D102. The oligomerization stretch occupies residues 160-172; sequence SANKLFPPQPEQY. 213 to 220 contacts ATP; the sequence is GPTRTGKT. Residues 236 to 254 are transactivation; sequence IDFTNYDEHATYNIIDDIP. Residues 276–286 carry the Nuclear localization signal motif; the sequence is KYGKKKKIKGG.

It belongs to the geminiviridae Rep protein family. Homooligomer. Rep binds to repeated DNA motifs (iterons). Forms the O-complex, which is a Rep-DNA complex involved in the initiation of RCR. Part of the C- and V-complexes which are RepA-Rep-DNA complexes involved in the c-sense and v-sense transcription. The cofactor is Mg(2+). Mn(2+) is required as a cofactor.

It localises to the host nucleus. In terms of biological role, essential for the replication of viral ssDNA. The closed circular ssDNA genome is first converted to a superhelical dsDNA. Rep binds a specific region at the genome origin of replication. It introduces an endonucleolytic nick within the conserved sequence 5'-TAATATTAC-3' in the intergenic region of the genome present in all geminiviruses, thereby initiating the rolling circle replication (RCR). Following cleavage, binds covalently to the 5'-phosphate of DNA as a tyrosyl ester. The cleavage gives rise to a free 3'-OH that serves as a primer for the cellular DNA polymerase. The polymerase synthesizes the (+) strand DNA by rolling circle mechanism. After one round of replication, a Rep-catalyzed nucleotidyl transfer reaction releases a circular single-stranded virus genome, thereby terminating the replication. Displays origin-specific DNA cleavage, nucleotidyl transferase, ATPase and helicase activities. Acts a an inhibitor of C-sense gene transcription. The protein is Replication-associated protein of Phaseolus vulgaris (Kidney bean).